Consider the following 294-residue polypeptide: Ribosomal protein L11 methyltransferase (294 aa).

4 residues coordinate S-adenosyl-L-methionine: T145, G166, D188, and N227.

This sequence belongs to the methyltransferase superfamily. PrmA family.

Its subcellular location is the cytoplasm. It carries out the reaction L-lysyl-[protein] + 3 S-adenosyl-L-methionine = N(6),N(6),N(6)-trimethyl-L-lysyl-[protein] + 3 S-adenosyl-L-homocysteine + 3 H(+). Functionally, methylates ribosomal protein L11. This chain is Ribosomal protein L11 methyltransferase, found in Hydrogenovibrio crunogenus (strain DSM 25203 / XCL-2) (Thiomicrospira crunogena).